Here is a 160-residue protein sequence, read N- to C-terminus: SsrA-binding protein (160 aa).

This sequence belongs to the SmpB family.

The protein resides in the cytoplasm. Its function is as follows. Required for rescue of stalled ribosomes mediated by trans-translation. Binds to transfer-messenger RNA (tmRNA), required for stable association of tmRNA with ribosomes. tmRNA and SmpB together mimic tRNA shape, replacing the anticodon stem-loop with SmpB. tmRNA is encoded by the ssrA gene; the 2 termini fold to resemble tRNA(Ala) and it encodes a 'tag peptide', a short internal open reading frame. During trans-translation Ala-aminoacylated tmRNA acts like a tRNA, entering the A-site of stalled ribosomes, displacing the stalled mRNA. The ribosome then switches to translate the ORF on the tmRNA; the nascent peptide is terminated with the 'tag peptide' encoded by the tmRNA and targeted for degradation. The ribosome is freed to recommence translation, which seems to be the essential function of trans-translation. In Salmonella agona (strain SL483), this protein is SsrA-binding protein.